A 315-amino-acid polypeptide reads, in one-letter code: Solute carrier family 25 member 32 (315 aa).

Solcar repeat units lie at residues 20-109 (HVRY…IKSY), 118-209 (LEAT…LKLK), and 222-306 (LSTV…VSHF). Helical transmembrane passes span 26–43 (LIAG…LHPL), 89–106 (IWGA…YNAI), 123–143 (YLVS…PLWV), 186–203 (FVPG…FMAY), 227–243 (YISV…AATY), and 281–300 (GIAP…FVVY).

This sequence belongs to the mitochondrial carrier (TC 2.A.29) family. As to expression, ubiquitous.

It is found in the mitochondrion inner membrane. It catalyses the reaction FAD(in) = FAD(out). Facilitates flavin adenine dinucleotide (FAD) translocation across the mitochondrial inner membrane into the mitochondrial matrix where it acts as a redox cofactor to assist flavoenzyme activities in fundamental metabolic processes including fatty acid beta-oxidation, amino acid and choline metabolism as well as mitochondrial electron transportation. In particular, provides FAD to DLD dehydrogenase of the glycine cleavage system, part of mitochondrial one-carbon metabolic pathway involved in neural tube closure in early embryogenesis. The polypeptide is Solute carrier family 25 member 32 (Homo sapiens (Human)).